A 257-amino-acid polypeptide reads, in one-letter code: Type III pantothenate kinase (257 aa).

6–13 provides a ligand contact to ATP; the sequence is EQGNTNTL. 107–110 is a binding site for substrate; it reads GADR. Aspartate 109 acts as the Proton acceptor in catalysis. Position 129 (aspartate 129) interacts with K(+). Threonine 132 serves as a coordination point for ATP. Threonine 184 contacts substrate.

This sequence belongs to the type III pantothenate kinase family. As to quaternary structure, homodimer. The cofactor is NH4(+). Requires K(+) as cofactor.

It is found in the cytoplasm. It catalyses the reaction (R)-pantothenate + ATP = (R)-4'-phosphopantothenate + ADP + H(+). The protein operates within cofactor biosynthesis; coenzyme A biosynthesis; CoA from (R)-pantothenate: step 1/5. Its function is as follows. Catalyzes the phosphorylation of pantothenate (Pan), the first step in CoA biosynthesis. The chain is Type III pantothenate kinase from Phenylobacterium zucineum (strain HLK1).